A 170-amino-acid chain; its full sequence is Adenine phosphoribosyltransferase (170 aa).

This sequence belongs to the purine/pyrimidine phosphoribosyltransferase family. As to quaternary structure, homodimer.

The protein localises to the cytoplasm. The enzyme catalyses AMP + diphosphate = 5-phospho-alpha-D-ribose 1-diphosphate + adenine. The protein operates within purine metabolism; AMP biosynthesis via salvage pathway; AMP from adenine: step 1/1. Catalyzes a salvage reaction resulting in the formation of AMP, that is energically less costly than de novo synthesis. In Bacillus velezensis (strain DSM 23117 / BGSC 10A6 / LMG 26770 / FZB42) (Bacillus amyloliquefaciens subsp. plantarum), this protein is Adenine phosphoribosyltransferase.